We begin with the raw amino-acid sequence, 259 residues long: Ubiquinone biosynthesis protein COQ4 homolog, mitochondrial (259 aa).

His162, Asp163, His166, and Glu178 together coordinate Zn(2+).

Belongs to the COQ4 family. Component of a multi-subunit COQ enzyme complex. The cofactor is Zn(2+).

Its subcellular location is the mitochondrion inner membrane. The enzyme catalyses a 4-hydroxy-3-methoxy-5-(all-trans-polyprenyl)benzoate + H(+) = a 2-methoxy-6-(all-trans-polyprenyl)phenol + CO2. It functions in the pathway cofactor biosynthesis; ubiquinone biosynthesis. Functionally, lyase that catalyzes the C1-decarboxylation of 4-hydroxy-3-methoxy-5-(all-trans-polyprenyl)benzoic acid into 2-methoxy-6-(all-trans-polyprenyl)phenol during ubiquinone biosynthesis. This Bombyx mori (Silk moth) protein is Ubiquinone biosynthesis protein COQ4 homolog, mitochondrial.